The sequence spans 321 residues: Peptidase 1 (321 aa).

A signal peptide spans 1–18; sequence MKIILAIASLLVLSAVYA. Residues 19-98 constitute a propeptide that is removed on maturation; the sequence is RPASIKTFEE…LKTQFDLNAE (80 aa). An N-linked (GlcNAc...) asparagine glycan is attached at Asn-34. Cys-130 and Cys-170 form a disulfide bridge. Residue Cys-133 is part of the active site. The N-linked (GlcNAc...) asparagine glycan is linked to Asn-151. Residues His-269 and Asn-289 contribute to the active site.

Belongs to the peptidase C1 family.

The protein localises to the secreted. The catalysed reaction is Broad endopeptidase specificity.. Probable thiol protease. The chain is Peptidase 1 (EURM1) from Euroglyphus maynei (Mayne's house dust mite).